We begin with the raw amino-acid sequence, 457 residues long: Streptogrisin-C (457 aa).

The tat-type signal signal peptide spans 1 to 34 (MERTTLRRRALVAGTATVAVGALALAGLTGVASA). Positions 35 to 202 (DPAATAAPPV…ARSAEQPRAL (168 aa)) are excised as a propeptide. The interval 203–393 (ADIRGGDAYY…QAYGLTLVTS (191 aa)) is catalytic. Residues cysteine 219 and cysteine 239 are joined by a disulfide bond. Active-site charge relay system residues include histidine 238 and aspartate 266. 2 disulfides stabilise this stretch: cysteine 305-cysteine 315 and cysteine 341-cysteine 368. Serine 347 (charge relay system) is an active-site residue. The segment at 393–412 (SGGGTPTDPPTTPPTDSPGG) is disordered. Positions 394–413 (GGGTPTDPPTTPPTDSPGGT) are linker. A compositionally biased stretch (pro residues) spans 399–408 (TDPPTTPPTD). The Chitin-binding type-3 domain occupies 415–457 (AVGTAYAAGATVTYGGATYRCLQAHTAQPGWTPADVPALWQRV).

Belongs to the peptidase S1 family. In terms of assembly, monomer. Post-translationally, predicted to be exported by the Tat system. The position of the signal peptide cleavage has not been experimentally proven.

Functionally, hydrolysis of proteins with specificity similar to chymotrypsin. May be specialized for the degradation of chitin-linked proteins. Has a primary specificity for large aliphatic or aromatic amino acids. The sequence is that of Streptogrisin-C (sprC) from Streptomyces griseus.